We begin with the raw amino-acid sequence, 78 residues long: uncharacterized protein (78 aa).

This is an uncharacterized protein from Helicobacter pylori (strain J99 / ATCC 700824) (Campylobacter pylori J99).